Reading from the N-terminus, the 574-residue chain is Developmental and secondary metabolism regulator veA (574 aa).

Disordered stretches follow at residues 1 to 22, 39 to 60, 255 to 500, and 513 to 540; these read MATR…SRIT, ERAR…VDPP, RSSD…GAGK, and RSYE…YPRR. A Velvet domain is found at 25–230; the sequence is GKKLTYKLNV…AEQGCRVRIR (206 aa). Residues 39–44 carry the Nuclear localization signal motif; the sequence is ERARAC. Pro residues-rich tracts occupy residues 314 to 323 and 330 to 341; these read RPLPPAPGPA and PAPPAPPAPPSH. Polar residues-rich tracts occupy residues 343–353, 385–394, 406–415, and 448–458; these read PGYQSHLSFGS, HARNPSTSAE, RMSTERSSYP, and VAQSAAPRSQT. The interval 457–498 is PEST; it reads QTPSSSLVPSLPPLKALSGDYPNNLSQSSSSTSQSPSHDLGA. Composition is skewed to low complexity over residues 459-474 and 482-493; these read PSSS…KALS and SQSSSSTSQSPS. Residues 513–525 show a composition bias toward basic and acidic residues; sequence RSYEDSFGHDDRP.

It belongs to the velvet family. VeA subfamily. Component of the heterotrimeric velvet complex composed of laeA, veA and velB; VeA acting as a bridging protein between laeA and velB.

It localises to the nucleus. It is found in the cytoplasm. In terms of biological role, component of the velvet transcription factor complex that controls sexual/asexual developmental ratio in response to light, promoting sexual development in the darkness while stimulating asexual sporulation under illumination. The velvet complex hat acts as a global regulator for secondary metabolite gene expression. Controls the expression of the cyclopiazonic acid, aflatrem, and aflatoxin gene clusters. Controls the expression of the sclerotium-specific pigment asparasone A gene cluster. Controls the expression of the aflavarin gene cluster. also controls the production of hydrolases and other extracellular proteins during growth on natural starch-based substrates. Regulates genes involved in the High Osmolarity Glycerol (HOG) signaling pathway. Required for the conidial and sclerotial density-dependent production. The sequence is that of Developmental and secondary metabolism regulator veA from Aspergillus flavus (strain ATCC 200026 / FGSC A1120 / IAM 13836 / NRRL 3357 / JCM 12722 / SRRC 167).